Reading from the N-terminus, the 293-residue chain is Undecaprenyl-diphosphatase (293 aa).

7 consecutive transmembrane segments (helical) span residues 3–23 (IALAIKALILGIVEGLTEFLP), 43–63 (KGKIFEIVIQFGAILAVCWEF), 85–105 (INVIVATIPAITLALIFGKAI), 109–129 (LFNPIVVASAFILGGFVILWA), 203–223 (VATEFSFFLAIPVIFGATVYE), 238–258 (IFAVGFVAAFISAFFCVRWLL), and 269–289 (FAWYRIIFGIIVLATAYTHLI).

This sequence belongs to the UppP family.

It is found in the cell inner membrane. The catalysed reaction is di-trans,octa-cis-undecaprenyl diphosphate + H2O = di-trans,octa-cis-undecaprenyl phosphate + phosphate + H(+). Its function is as follows. Catalyzes the dephosphorylation of undecaprenyl diphosphate (UPP). Confers resistance to bacitracin. The chain is Undecaprenyl-diphosphatase from Ralstonia pickettii (strain 12J).